The chain runs to 513 residues: uncharacterized protein (513 aa).

One can recognise an HDOD domain in the interval 254–447 (IPQLPSKLLE…INTIRFHHNL (194 aa)).

This is an uncharacterized protein from Treponema pallidum (strain Nichols).